We begin with the raw amino-acid sequence, 198 residues long: Thymidylate kinase (198 aa).

10 to 17 (GLDGSGKT) provides a ligand contact to ATP.

It belongs to the thymidylate kinase family.

The catalysed reaction is dTMP + ATP = dTDP + ADP. Its function is as follows. Phosphorylation of dTMP to form dTDP in both de novo and salvage pathways of dTTP synthesis. The polypeptide is Thymidylate kinase (Thermus thermophilus (strain ATCC BAA-163 / DSM 7039 / HB27)).